The following is a 332-amino-acid chain: Glycerol-3-phosphate dehydrogenase [NAD(P)+] (332 aa).

Residues Trp11, Arg30, and Lys108 each coordinate NADPH. Residues Lys108, Gly137, and Ser139 each contribute to the sn-glycerol 3-phosphate site. Ala141 serves as a coordination point for NADPH. Sn-glycerol 3-phosphate-binding residues include Lys192, Asp245, Ser255, Arg256, and Asn257. Lys192 acts as the Proton acceptor in catalysis. Residue Arg256 coordinates NADPH. Val280 and Glu282 together coordinate NADPH.

It belongs to the NAD-dependent glycerol-3-phosphate dehydrogenase family.

Its subcellular location is the cytoplasm. The catalysed reaction is sn-glycerol 3-phosphate + NAD(+) = dihydroxyacetone phosphate + NADH + H(+). It carries out the reaction sn-glycerol 3-phosphate + NADP(+) = dihydroxyacetone phosphate + NADPH + H(+). The protein operates within membrane lipid metabolism; glycerophospholipid metabolism. Catalyzes the reduction of the glycolytic intermediate dihydroxyacetone phosphate (DHAP) to sn-glycerol 3-phosphate (G3P), the key precursor for phospholipid synthesis. The protein is Glycerol-3-phosphate dehydrogenase [NAD(P)+] of Burkholderia mallei (strain ATCC 23344).